The primary structure comprises 530 residues: Probable cytochrome P450 519A1 (530 aa).

Residues 1–21 (MESIINLIFYIIIFLILIDFL) form a helical membrane-spanning segment. Cys476 is a heme binding site.

The protein belongs to the cytochrome P450 family. Heme is required as a cofactor.

The protein resides in the membrane. In Dictyostelium discoideum (Social amoeba), this protein is Probable cytochrome P450 519A1 (cyp519A1).